The sequence spans 215 residues: Pyrrolidone-carboxylate peptidase (215 aa).

Residues Glu-80, Cys-143, and His-167 contribute to the active site.

The protein belongs to the peptidase C15 family. As to quaternary structure, homotetramer.

It is found in the cytoplasm. It carries out the reaction Release of an N-terminal pyroglutamyl group from a polypeptide, the second amino acid generally not being Pro.. In terms of biological role, removes 5-oxoproline from various penultimate amino acid residues except L-proline. This Brevibacillus brevis (strain 47 / JCM 6285 / NBRC 100599) protein is Pyrrolidone-carboxylate peptidase.